The primary structure comprises 216 residues: Elongation factor Ts (216 aa).

Positions 81–84 (TDFV) are involved in Mg(2+) ion dislocation from EF-Tu.

It belongs to the EF-Ts family.

It localises to the cytoplasm. Functionally, associates with the EF-Tu.GDP complex and induces the exchange of GDP to GTP. It remains bound to the aminoacyl-tRNA.EF-Tu.GTP complex up to the GTP hydrolysis stage on the ribosome. The sequence is that of Elongation factor Ts from Geobacter sp. (strain M21).